Reading from the N-terminus, the 240-residue chain is BLOC-1-related complex subunit 8 homolog (240 aa).

Disordered regions lie at residues 1–33 and 163–240; these read MSSILKSSTGSNHSSTSNHSSINNISQLSGSHG and KTFS…EKIN. Low complexity-rich tracts occupy residues 7 to 26 and 163 to 179; these read SSTGSNHSSTSNHSSINNIS and KTFSSFQQQHKIYQQQQ. Residues 180-190 show a composition bias toward polar residues; the sequence is TNLTPSKPTLS. Over residues 196–205 the composition is skewed to low complexity; that stretch reads DNNNNNNNLN. Residues 208 to 240 show a composition bias toward basic and acidic residues; that stretch reads EKIEKEEKIEKEDEGKEKDEKEKDDKDLNEKIN. Residues 211-239 adopt a coiled-coil conformation; that stretch reads EKEEKIEKEDEGKEKDEKEKDDKDLNEKI.

This sequence belongs to the BORCS8 family.

It is found in the lysosome membrane. May participate in the coupling of lysosomes to microtubule plus-end-directed kinesin motor. This is BLOC-1-related complex subunit 8 homolog from Dictyostelium discoideum (Social amoeba).